Reading from the N-terminus, the 245-residue chain is Probable phosphatase YcdX (245 aa).

Zn(2+) contacts are provided by H7, H9, H15, H40, E73, H101, H131, D192, and H194.

The protein belongs to the PHP family. Homotrimer. The cofactor is Zn(2+).

The sequence is that of Probable phosphatase YcdX from Escherichia coli O139:H28 (strain E24377A / ETEC).